The chain runs to 322 residues: Endochitinase CH25 (322 aa).

The signal sequence occupies residues 1 to 20 (MKSCLLLFLIFSFLLSFSLA). Positions 21–62 (EQCGRQAGGALCPNGLCCSEFGWCGDTEAYCKQPGCQSQCGG) constitute a Chitin-binding type-1 domain. 7 disulfide bridges follow: Cys-23–Cys-38, Cys-32–Cys-44, Cys-37–Cys-51, Cys-56–Cys-60, Cys-92–Cys-154, Cys-166–Cys-174, and Cys-273–Cys-305. Glu-136 acts as the Proton donor in catalysis.

Belongs to the glycosyl hydrolase 19 family. Chitinase class I subfamily. High expression in roots, moderate in floral tissues and low in stems and leaves.

The enzyme catalyses Random endo-hydrolysis of N-acetyl-beta-D-glucosaminide (1-&gt;4)-beta-linkages in chitin and chitodextrins.. The chain is Endochitinase CH25 from Brassica napus (Rape).